A 1286-amino-acid chain; its full sequence is 5-oxoprolinase (1286 aa).

Phosphoserine is present on residues serine 930 and serine 1077.

This sequence belongs to the oxoprolinase family. In terms of assembly, homodimer.

It is found in the cytoplasm. The catalysed reaction is 5-oxo-L-proline + ATP + 2 H2O = L-glutamate + ADP + phosphate + H(+). Its function is as follows. Catalyzes the cleavage of 5-oxo-L-proline to form L-glutamate coupled to the hydrolysis of ATP to ADP and inorganic phosphate. This chain is 5-oxoprolinase (OXP1), found in Saccharomyces cerevisiae (strain ATCC 204508 / S288c) (Baker's yeast).